The primary structure comprises 572 residues: Proline--tRNA ligase (572 aa).

This sequence belongs to the class-II aminoacyl-tRNA synthetase family. ProS type 1 subfamily. As to quaternary structure, homodimer.

Its subcellular location is the cytoplasm. The enzyme catalyses tRNA(Pro) + L-proline + ATP = L-prolyl-tRNA(Pro) + AMP + diphosphate. Its function is as follows. Catalyzes the attachment of proline to tRNA(Pro) in a two-step reaction: proline is first activated by ATP to form Pro-AMP and then transferred to the acceptor end of tRNA(Pro). As ProRS can inadvertently accommodate and process non-cognate amino acids such as alanine and cysteine, to avoid such errors it has two additional distinct editing activities against alanine. One activity is designated as 'pretransfer' editing and involves the tRNA(Pro)-independent hydrolysis of activated Ala-AMP. The other activity is designated 'posttransfer' editing and involves deacylation of mischarged Ala-tRNA(Pro). The misacylated Cys-tRNA(Pro) is not edited by ProRS. The polypeptide is Proline--tRNA ligase (Hydrogenovibrio crunogenus (strain DSM 25203 / XCL-2) (Thiomicrospira crunogena)).